The following is an 890-amino-acid chain: MSQGILSPPAGLLSDDDVVVSPMFESTAADLGSVVRKNLLSDCSVVSTSLEDKQQVPSEDSMEKVKVYLRVRPLLPSELERQEDQGCVRIENVETLVLQAPKDSFALKSNERGIGQATHRFTFSQIFGPEVGQASFFNLTVKEMVKDVLKGQNWLIYTYGVTNSGKTHTIQGTIKDGGILPRSLALIFNSLQGQLHPTPDLKPLLSNEVIWLDSKQIRQEEMKKLSLLNGGLQEEELSTSLKRSVYIESRIGTSTSFDSGIAGLSSISQCTSSSQLDETSHRWAQPDTAPLPVPANIRFSIWISFFEIYNELLYDLLEPPSQQRKRQTLRLCEDQNGNPYVKDLNWIHVQDAEEAWKLLKVGRKNQSFASTHLNQNSSRSHSIFSIRILHLQGEGDIVPKISELSLCDLAGSERCKDQKSGERLKEAGNINTSLHTLGRCIAALRQNQQNRSKQNLVPFRDSKLTRVFQGFFTGRGRSCMIVNVNPCASTYDETLHVAKFSAIASQLVHAPPMQLGFPSLHSFIKEHSLQVSPSLEKGAKADTGLDDDIENEADISMYGKEELLQVVEAMKTLLLKERQEKLQLEMHLRDEICNEMVEQMQQREQWCSEHLDTQKELLEEMYEEKLNILKESLTSFYQEEIQERDEKIEELEALLQEARQQSVAHQQSGSELALRRSQRLAASASTQQLQEVKAKLQQCKAELNSTTEELHKYQKMLEPPPSAKPFTIDVDKKLEEGQKNIRLLRTELQKLGESLQSAERACCHSTGAGKLRQALTTCDDILIKQDQTLAELQNNMVLVKLDLRKKAACIAEQYHTVLKLQGQVSAKKRLGTNQENQQPNQQPPGKKPFLRNLLPRTPTCQSSTDCSPYARILRSRRSPLLKSGPFGKKY.

Residue Ser-2 is modified to N-acetylserine. 3 positions are modified to phosphoserine: Ser-7, Ser-14, and Ser-21. Residues 64–507 enclose the Kinesin motor domain; it reads KVKVYLRVRP…AKFSAIASQL (444 aa). An ATP-binding site is contributed by 160–167; it reads GVTNSGKT. Ser-528 bears the Phosphoserine; by PLK1 mark. A phosphoserine mark is found at Ser-532, Ser-662, Ser-668, Ser-685, and Ser-825. A coiled-coil region spans residues 611–762; sequence LDTQKELLEE…ESLQSAERAC (152 aa). The interval 763–890 is globular; it reads CHSTGAGKLR…LKSGPFGKKY (128 aa). Residues 832–865 form a disordered region; that stretch reads TNQENQQPNQQPPGKKPFLRNLLPRTPTCQSSTD. Residue Thr-857 is modified to Phosphothreonine. Phosphoserine is present on residues Ser-867, Ser-878, and Ser-883.

This sequence belongs to the TRAFAC class myosin-kinesin ATPase superfamily. Kinesin family. Phosphorylated by PLK1 at Ser-528 during mitosis, creating a docking site for PLK1 and recruiting PLK1 at central spindle.

The protein localises to the golgi apparatus. It is found in the cytoplasm. It localises to the cytoskeleton. The protein resides in the spindle. Functionally, mitotic kinesin required for chromosome passenger complex (CPC)-mediated cytokinesis. Following phosphorylation by PLK1, involved in recruitment of PLK1 to the central spindle. Interacts with guanosine triphosphate (GTP)-bound forms of RAB6A and RAB6B. May act as a motor required for the retrograde RAB6 regulated transport of Golgi membranes and associated vesicles along microtubules. Has a microtubule plus end-directed motility. This is Kinesin-like protein KIF20A (KIF20A) from Homo sapiens (Human).